Reading from the N-terminus, the 640-residue chain is Ribonuclease J (640 aa).

Positions 75, 77, 79, 80, 145, and 167 each coordinate Zn(2+). Residue His368 to His372 coordinates substrate. His394 is a binding site for Zn(2+). Residues Thr578–Ser640 form a disordered region. A compositionally biased stretch (basic and acidic residues) spans Pro598 to Val610.

It belongs to the metallo-beta-lactamase superfamily. RNA-metabolizing metallo-beta-lactamase-like family. Bacterial RNase J subfamily. Homodimer, may be a subunit of the RNA degradosome. Zn(2+) serves as cofactor.

The protein resides in the cytoplasm. An RNase that has 5'-3' exonuclease and possibly endoonuclease activity. Involved in maturation of rRNA and in some organisms also mRNA maturation and/or decay. The sequence is that of Ribonuclease J from Synechocystis sp. (strain ATCC 27184 / PCC 6803 / Kazusa).